A 126-amino-acid polypeptide reads, in one-letter code: uncharacterized protein (126 aa).

This is an uncharacterized protein from Agrobacterium tumefaciens (strain 15955).